Here is a 385-residue protein sequence, read N- to C-terminus: Centrosomal protein of 44 kDa (385 aa).

Positions Arg-11–Thr-192 are binds with microtubules and centrioles. Residues Leu-126–Glu-154 form a disordered region. Over residues Ser-139–Glu-154 the composition is skewed to polar residues. A coiled-coil region spans residues Glu-230–Lys-271. The disordered stretch occupies residues Ser-303–Thr-348. Positions Asp-305–Ser-314 are enriched in low complexity. The span at Asn-316–Ala-327 shows a compositional bias: basic and acidic residues. Positions Ser-332 to Ser-342 are enriched in low complexity. Residue Ser-342 is modified to Phosphoserine. A Phosphothreonine modification is found at Thr-343. The stretch at Ser-358–Lys-381 forms a coiled coil.

Interacts with CROCC. Interacts with POC1B; the interaction is direct and recruits POC1B to centriolar microtubules. Binds to centriolar microtubules.

Its subcellular location is the cytoplasm. The protein resides in the cytoskeleton. It localises to the microtubule organizing center. It is found in the centrosome. The protein localises to the centriole. Its subcellular location is the spindle pole. The protein resides in the midbody. Functionally, centriole-enriched microtubule-binding protein involved in centriole biogenesis. In collaboration with CEP295 and POC1B, is required for the centriole-to-centrosome conversion by ensuring the formation of bona fide centriole wall. Functions as a linker component that maintains centrosome cohesion. Associates with CROCC and regulates its stability and localization to the centrosome. The protein is Centrosomal protein of 44 kDa (CEP44) of Bos taurus (Bovine).